A 621-amino-acid polypeptide reads, in one-letter code: Intermediate filament protein ifc-2 (621 aa).

The segment at Ser20 to Glu55 is head. The IF rod domain maps to Glu52–Thr400. Residues Ile56–Leu87 form a coil 1A region. Residues Arg88–Leu100 are linker 1. Positions Tyr101–Glu238 are coil 1B. Residues Leu239–His256 form a linker 12 region. A coil 2 region spans residues Glu257–Thr400. The tail stretch occupies residues Tyr401–Glu549. An LTD domain is found at Ser508–Asn621.

Belongs to the intermediate filament family.

The protein localises to the cytoplasm. Its function is as follows. Cytoplasmic intermediate filaments provide mechanical strength to cells. The sequence is that of Intermediate filament protein ifc-2 from Caenorhabditis briggsae.